Here is a 286-residue protein sequence, read N- to C-terminus: Shikimate dehydrogenase (NADP(+)) (286 aa).

Residues 19–21 (SVS) and threonine 66 contribute to the shikimate site. The active-site Proton acceptor is lysine 70. 2 residues coordinate shikimate: asparagine 91 and aspartate 106. Residues 130 to 134 (GAGGS) and alanine 225 contribute to the NADP(+) site. Tyrosine 227 is a binding site for shikimate. Glycine 248 contacts NADP(+).

This sequence belongs to the shikimate dehydrogenase family. Homodimer.

It catalyses the reaction shikimate + NADP(+) = 3-dehydroshikimate + NADPH + H(+). It participates in metabolic intermediate biosynthesis; chorismate biosynthesis; chorismate from D-erythrose 4-phosphate and phosphoenolpyruvate: step 4/7. In terms of biological role, involved in the biosynthesis of the chorismate, which leads to the biosynthesis of aromatic amino acids. Catalyzes the reversible NADPH linked reduction of 3-dehydroshikimate (DHSA) to yield shikimate (SA). This is Shikimate dehydrogenase (NADP(+)) from Dehalococcoides mccartyi (strain CBDB1).